The following is a 178-amino-acid chain: MAELTTLARPYAKAVFDAAQDQNAVDQWDQALAFAAQVAADQEVKNILANPGLSEQRKAELFAECFEEPLPEALRNFLLILAENKRLALLPEISALFRLYRADLEKSVHLTIDTAFDLSADEQQKLIDALSKKLERKVELETTVDQSLIGGVIVRTGDLVIDASVRGKLARMARALGS.

This sequence belongs to the ATPase delta chain family. As to quaternary structure, F-type ATPases have 2 components, F(1) - the catalytic core - and F(0) - the membrane proton channel. F(1) has five subunits: alpha(3), beta(3), gamma(1), delta(1), epsilon(1). F(0) has three main subunits: a(1), b(2) and c(10-14). The alpha and beta chains form an alternating ring which encloses part of the gamma chain. F(1) is attached to F(0) by a central stalk formed by the gamma and epsilon chains, while a peripheral stalk is formed by the delta and b chains.

It is found in the cell inner membrane. In terms of biological role, f(1)F(0) ATP synthase produces ATP from ADP in the presence of a proton or sodium gradient. F-type ATPases consist of two structural domains, F(1) containing the extramembraneous catalytic core and F(0) containing the membrane proton channel, linked together by a central stalk and a peripheral stalk. During catalysis, ATP synthesis in the catalytic domain of F(1) is coupled via a rotary mechanism of the central stalk subunits to proton translocation. Its function is as follows. This protein is part of the stalk that links CF(0) to CF(1). It either transmits conformational changes from CF(0) to CF(1) or is implicated in proton conduction. This Marinobacter nauticus (strain ATCC 700491 / DSM 11845 / VT8) (Marinobacter aquaeolei) protein is ATP synthase subunit delta.